A 262-amino-acid chain; its full sequence is Diphthine synthase (262 aa).

S-adenosyl-L-methionine is bound by residues leucine 10, aspartate 87, valine 90, 115–116 (SI), leucine 166, alanine 209, and histidine 234.

The protein belongs to the diphthine synthase family. As to quaternary structure, homodimer.

The catalysed reaction is 2-[(3S)-amino-3-carboxypropyl]-L-histidyl-[translation elongation factor 2] + 3 S-adenosyl-L-methionine = diphthine-[translation elongation factor 2] + 3 S-adenosyl-L-homocysteine + 3 H(+). It functions in the pathway protein modification; peptidyl-diphthamide biosynthesis. In terms of biological role, S-adenosyl-L-methionine-dependent methyltransferase that catalyzes the trimethylation of the amino group of the modified target histidine residue in translation elongation factor 2 (EF-2), to form an intermediate called diphthine. The three successive methylation reactions represent the second step of diphthamide biosynthesis. This chain is Diphthine synthase, found in Pyrococcus abyssi (strain GE5 / Orsay).